Here is a 565-residue protein sequence, read N- to C-terminus: Putative serine protease pcp-1 (565 aa).

An N-terminal signal peptide occupies residues 1–17; it reads MRWFLVLLLVALVSVEA. Residues Asn-69, Asn-107, and Asn-126 are each glycosylated (N-linked (GlcNAc...) asparagine). Ser-177 functions as the Charge relay system in the catalytic mechanism. N-linked (GlcNAc...) asparagine glycans are attached at residues Asn-240, Asn-244, Asn-257, Asn-271, Asn-319, and Asn-347. Active-site charge relay system residues include Asp-451 and His-479.

This sequence belongs to the peptidase S28 family.

This chain is Putative serine protease pcp-1 (pcp-1), found in Caenorhabditis elegans.